Consider the following 260-residue polypeptide: Vesicle-associated membrane protein/synaptobrevin-binding protein (260 aa).

At 1–238 (MASHEQALIL…SPAPAAAVRA (238 aa)) the chain is on the cytoplasmic side. An MSP domain is found at 7 to 125 (ALILEPAGEL…MDTKLRCVFE (119 aa)). The segment at 127-177 (PDGSHQAPASDASRATDAGAHFSESALEDPTVASRKTETQSPKRVGAVGSA) is disordered. The stretch at 172–216 (GAVGSAGEDVKKLQHELKKAQSEITSLKGENSQLKDEGIRLRKVA) forms a coiled coil. Residues 239–259 (FPPVVYVVAAIILGLIIGKFL) form a helical; Anchor for type IV membrane protein membrane-spanning segment.

Belongs to the VAMP-associated protein (VAP) (TC 9.B.17) family. Detected only in the central nervous system and the gill of aplysia.

Its subcellular location is the membrane. The protein localises to the synapse. It is found in the synaptosome. Required for neurotransmitter release. Interacts with VAMP. This Aplysia californica (California sea hare) protein is Vesicle-associated membrane protein/synaptobrevin-binding protein.